The following is a 361-amino-acid chain: S-adenosylmethionine:tRNA ribosyltransferase-isomerase (361 aa).

This sequence belongs to the QueA family. As to quaternary structure, monomer.

Its subcellular location is the cytoplasm. The enzyme catalyses 7-aminomethyl-7-carbaguanosine(34) in tRNA + S-adenosyl-L-methionine = epoxyqueuosine(34) in tRNA + adenine + L-methionine + 2 H(+). The protein operates within tRNA modification; tRNA-queuosine biosynthesis. In terms of biological role, transfers and isomerizes the ribose moiety from AdoMet to the 7-aminomethyl group of 7-deazaguanine (preQ1-tRNA) to give epoxyqueuosine (oQ-tRNA). This is S-adenosylmethionine:tRNA ribosyltransferase-isomerase from Afipia carboxidovorans (strain ATCC 49405 / DSM 1227 / KCTC 32145 / OM5) (Oligotropha carboxidovorans).